The primary structure comprises 261 residues: Thiamine thiazole synthase (261 aa).

Residues Ala33, 52–53 (ER), Gly60, Val124, and 152–154 (HVD) contribute to the NAD(+) site. Residues Asp154 and His169 each coordinate Fe cation. Ile219 contacts NAD(+). Arg229 contacts glycine.

The protein belongs to the THI4 family. Homooctamer; tetramer of dimers. It depends on Fe(2+) as a cofactor.

It catalyses the reaction hydrogen sulfide + glycine + NAD(+) = ADP-5-ethyl-4-methylthiazole-2-carboxylate + nicotinamide + 3 H2O + H(+). Its pathway is cofactor biosynthesis; thiamine diphosphate biosynthesis. Functionally, involved in the biosynthesis of the thiazole moiety of thiamine. Catalyzes the conversion of NAD and glycine to adenosine diphosphate 5-(2-hydroxyethyl)-4-methylthiazole-2-carboxylate (ADT), an adenylated thiazole intermediate, using free sulfide as a source of sulfur. The sequence is that of Thiamine thiazole synthase from Pyrobaculum calidifontis (strain DSM 21063 / JCM 11548 / VA1).